The primary structure comprises 251 residues: 3-deoxy-manno-octulosonate cytidylyltransferase (251 aa).

Belongs to the KdsB family.

It is found in the cytoplasm. The enzyme catalyses 3-deoxy-alpha-D-manno-oct-2-ulosonate + CTP = CMP-3-deoxy-beta-D-manno-octulosonate + diphosphate. It participates in nucleotide-sugar biosynthesis; CMP-3-deoxy-D-manno-octulosonate biosynthesis; CMP-3-deoxy-D-manno-octulosonate from 3-deoxy-D-manno-octulosonate and CTP: step 1/1. It functions in the pathway bacterial outer membrane biogenesis; lipopolysaccharide biosynthesis. Functionally, activates KDO (a required 8-carbon sugar) for incorporation into bacterial lipopolysaccharide in Gram-negative bacteria. The chain is 3-deoxy-manno-octulosonate cytidylyltransferase from Chromobacterium violaceum (strain ATCC 12472 / DSM 30191 / JCM 1249 / CCUG 213 / NBRC 12614 / NCIMB 9131 / NCTC 9757 / MK).